The chain runs to 311 residues: MINPLYRKHIISINDMSSNELELVLNIAAHLKFKPQPELLKNKVIASCFFEASTRTRLSFETAIHRLGASVVGFSDAHSTSLSKKGETLADTISVISTYVDAIIIRHPHEGAARLATEFSGTVPILNAGDGANQHPTQTLLDLFNIYETQGKLNNLRIAMVGDLKYGRTVHSLTQALIKFDSNHFYFIAPDTLGMPSYILHTLIDHDIKYSMHLNLAEVIPELDILYMTRVQKERLDPTEYINVKAQFVLQIHHLLHARANMRILHPLPRVDEIAYEVDQTPYAYYFQQAGNGVFTRQALLALVLNKYLTE.

Carbamoyl phosphate contacts are provided by Arg55 and Thr56. L-aspartate is bound at residue Lys85. Carbamoyl phosphate contacts are provided by Arg106, His135, and Gln138. The L-aspartate site is built by Arg168 and Arg230. Leu268 and Pro269 together coordinate carbamoyl phosphate.

It belongs to the aspartate/ornithine carbamoyltransferase superfamily. ATCase family. In terms of assembly, heterododecamer (2C3:3R2) of six catalytic PyrB chains organized as two trimers (C3), and six regulatory PyrI chains organized as three dimers (R2).

It carries out the reaction carbamoyl phosphate + L-aspartate = N-carbamoyl-L-aspartate + phosphate + H(+). Its pathway is pyrimidine metabolism; UMP biosynthesis via de novo pathway; (S)-dihydroorotate from bicarbonate: step 2/3. Catalyzes the condensation of carbamoyl phosphate and aspartate to form carbamoyl aspartate and inorganic phosphate, the committed step in the de novo pyrimidine nucleotide biosynthesis pathway. In Baumannia cicadellinicola subsp. Homalodisca coagulata, this protein is Aspartate carbamoyltransferase catalytic subunit.